The primary structure comprises 369 residues: Gap junction alpha-5 protein (369 aa).

Topologically, residues 2 to 19 are cytoplasmic; the sequence is GDWSFLGEFLEEVHKHST. Residues 20–40 form a helical membrane-spanning segment; the sequence is VVGKVWLTVLFIFRMLVLGTA. Topologically, residues 41–76 are extracellular; that stretch reads AGPLWGDEQSDFMCDTQQPGCENVCYDKAFPISHVR. The chain crosses the membrane as a helical span at residues 77–97; that stretch reads FWVLQIIFVSTPSLVYMGHAM. Over 98-169 the chain is Cytoplasmic; the sequence is HTVRMEEKRK…YSILIRTAME (72 aa). The helical transmembrane segment at 170–190 threads the bilayer; that stretch reads IAFIVGQYILYGIFLETLYIC. Topologically, residues 191-210 are extracellular; it reads QRAPCPHPVNCYVSRPTEKN. A helical membrane pass occupies residues 211–231; it reads VFIIFMLAVAVLSLFLSLAEL. Residues 232–369 are Cytoplasmic-facing; that stretch reads YHLGWKKAKE…SKARSDDLSV (138 aa). The interval 347–369 is disordered; sequence NEKRRFSKASRASSKARSDDLSV.

The protein belongs to the connexin family. Alpha-type (group II) subfamily. As to quaternary structure, a connexon is composed of a hexamer of connexins. Mostly in heart, and in the whole embryo, liver, stomach, and pectoral muscle.

The protein resides in the cell membrane. Its subcellular location is the cell junction. The protein localises to the gap junction. In terms of biological role, one gap junction consists of a cluster of closely packed pairs of transmembrane channels, the connexons, through which materials of low MW diffuse from one cell to a neighboring cell. The sequence is that of Gap junction alpha-5 protein (GJA5) from Gallus gallus (Chicken).